Reading from the N-terminus, the 78-residue chain is Conotoxin TsMEKL-P012 (78 aa).

An N-terminal signal peptide occupies residues 1 to 19 (MEKLTILLLLAAVLVLAQA). Positions 20 to 38 (LIKKGGGEKRQKEKINFLS) are excised as a propeptide. Intrachain disulfides connect cysteine 52/cysteine 66, cysteine 59/cysteine 70, and cysteine 65/cysteine 75.

The protein belongs to the conotoxin O2 superfamily. As to expression, expressed by the venom duct.

The protein resides in the secreted. The polypeptide is Conotoxin TsMEKL-P012 (Conus tessulatus (Tessellate cone)).